A 375-amino-acid polypeptide reads, in one-letter code: 23S rRNA (uracil(747)-C(5))-methyltransferase RlmC (375 aa).

Residues cysteine 3, cysteine 11, cysteine 14, and cysteine 87 each contribute to the [4Fe-4S] cluster site. S-adenosyl-L-methionine is bound by residues glutamine 212, phenylalanine 241, glutamate 262, and asparagine 307. Catalysis depends on cysteine 334, which acts as the Nucleophile.

The protein belongs to the class I-like SAM-binding methyltransferase superfamily. RNA M5U methyltransferase family. RlmC subfamily.

The catalysed reaction is uridine(747) in 23S rRNA + S-adenosyl-L-methionine = 5-methyluridine(747) in 23S rRNA + S-adenosyl-L-homocysteine + H(+). In terms of biological role, catalyzes the formation of 5-methyl-uridine at position 747 (m5U747) in 23S rRNA. In Escherichia coli O17:K52:H18 (strain UMN026 / ExPEC), this protein is 23S rRNA (uracil(747)-C(5))-methyltransferase RlmC.